The primary structure comprises 448 residues: Probable glycine dehydrogenase (decarboxylating) subunit 1 (448 aa).

The protein belongs to the GcvP family. N-terminal subunit subfamily. As to quaternary structure, the glycine cleavage system is composed of four proteins: P, T, L and H. In this organism, the P 'protein' is a heterodimer of two subunits.

It catalyses the reaction N(6)-[(R)-lipoyl]-L-lysyl-[glycine-cleavage complex H protein] + glycine + H(+) = N(6)-[(R)-S(8)-aminomethyldihydrolipoyl]-L-lysyl-[glycine-cleavage complex H protein] + CO2. The glycine cleavage system catalyzes the degradation of glycine. The P protein binds the alpha-amino group of glycine through its pyridoxal phosphate cofactor; CO(2) is released and the remaining methylamine moiety is then transferred to the lipoamide cofactor of the H protein. In Caulobacter vibrioides (strain ATCC 19089 / CIP 103742 / CB 15) (Caulobacter crescentus), this protein is Probable glycine dehydrogenase (decarboxylating) subunit 1.